Consider the following 455-residue polypeptide: MTLALSGQKVLVFGLAKSGVAALRLLRQQGADVTALDARGEDALGAVAHEVKALGATRVSGPTPPGLLASQDLVVVSPGVPLALPEIQAARAAGVAVWGEVELAGRMLSGVPLFGITGTNGKSTTTALTGTLFASGDKRTFVGGNLGRPFSEAAMSPGDWDALVVELSSYQLEGIRTLRPRGAAILNLTPDHIDRYPSHAAYGEAKARIFQNQQAGDFVVVNADDADVLGLARAAKAPVYGFSLTGKPVADAPALAGLAVVEPGGFRLAFLGEHYTLTNRALRGAHNAQNAMAAALLARLGGVASGAVQAGLDGYPGLPHRLESVRVLDGVEWVNDSKATNVDSVLVALRAFSQGVWLIAGGKGKGAPYAPMVEAGQGKVKGVLTIGDDADTLARAYAGAAQVHACGTLAHAVARARELAERGDTVLLSPACASFDQFKNFEDRGDSFKRLVEAL.

118 to 124 (GTNGKST) contributes to the ATP binding site.

This sequence belongs to the MurCDEF family.

The protein resides in the cytoplasm. The enzyme catalyses UDP-N-acetyl-alpha-D-muramoyl-L-alanine + D-glutamate + ATP = UDP-N-acetyl-alpha-D-muramoyl-L-alanyl-D-glutamate + ADP + phosphate + H(+). It participates in cell wall biogenesis; peptidoglycan biosynthesis. Functionally, cell wall formation. Catalyzes the addition of glutamate to the nucleotide precursor UDP-N-acetylmuramoyl-L-alanine (UMA). This is UDP-N-acetylmuramoylalanine--D-glutamate ligase from Myxococcus xanthus (strain DK1622).